The chain runs to 478 residues: Noelin-3 (478 aa).

A signal peptide spans 1 to 23 (MSPPLLKLGAVLSTMAMISNWMS). N-linked (GlcNAc...) asparagine glycans are attached at residues asparagine 33, asparagine 95, asparagine 179, asparagine 299, and asparagine 465. Positions 77 to 217 (CSRDAKSRQL…TRLRDCMKKL (141 aa)) form a coiled coil. The Olfactomedin-like domain occupies 218 to 470 (TCGKLMKITG…QVLFNVTLFH (253 aa)). The cysteines at positions 219 and 401 are disulfide-linked.

In terms of assembly, peripherally associated with AMPAR complex. AMPAR complex consists of an inner core made of 4 pore-forming GluA/GRIA proteins (GRIA1, GRIA2, GRIA3 and GRIA4) and 4 major auxiliary subunits arranged in a twofold symmetry. One of the two pairs of distinct binding sites is occupied either by CNIH2, CNIH3 or CACNG2, CACNG3. The other harbors CACNG2, CACNG3, CACNG4, CACNG8 or GSG1L. This inner core of AMPAR complex is complemented by outer core constituents binding directly to the GluA/GRIA proteins at sites distinct from the interaction sites of the inner core constituents. Outer core constituents include at least PRRT1, PRRT2, CKAMP44/SHISA9, FRRS1L and NRN1. The proteins of the inner and outer core serve as a platform for other, more peripherally associated AMPAR constituents, including OLFM3. Alone or in combination, these auxiliary subunits control the gating and pharmacology of the AMPAR complex and profoundly impact their biogenesis and protein processing. Homodimer. Interacts with MYOC. Interacts with OLFM2. In the eye, expressed in trabecular meshwork and neural retina; in non-ocular tissues, expressed in brain and lung.

It is found in the secreted. The protein resides in the synapse. The polypeptide is Noelin-3 (OLFM3) (Homo sapiens (Human)).